The chain runs to 47 residues: Packaging protein P22 (47 aa).

A helical transmembrane segment spans residues Thr22 to Ile42.

Heterodimer of P20 and P22; further multimerizes as hexamers of heterodimers. Part of the dodecameric portal complex that is composed of the packaging efficiency factor P6, the DNA packaging ATPase P9, and the internal heterododecamer P20/P22 which spans the virion inner membrane.

It is found in the virion membrane. Together with P22, forms the internal part of the portal complex embeded in the virion internal membrane and which plays critical roles in genome packaging and genome ejection. Both proteins multimerize as a single ring-shaped heterdodecamer arranged around a central channel and interact with the P6/P9 external part of the portal. This is Packaging protein P22 (XXII) from Enterobacteria phage PRD1 (Bacteriophage PRD1).